A 102-amino-acid chain; its full sequence is Small ribosomal subunit protein uS10 (102 aa).

The protein belongs to the universal ribosomal protein uS10 family. As to quaternary structure, part of the 30S ribosomal subunit.

Functionally, involved in the binding of tRNA to the ribosomes. The polypeptide is Small ribosomal subunit protein uS10 (Streptococcus thermophilus (strain CNRZ 1066)).